We begin with the raw amino-acid sequence, 700 residues long: Hedgehog-interacting protein (700 aa).

A signal peptide spans Met1 to Gly17. Asn99 carries N-linked (GlcNAc...) asparagine glycosylation. 10 disulfide bridges follow: Cys216/Cys536, Cys218/Cys543, Cys402/Cys624, Cys435/Cys452, Cys500/Cys594, Cys612/Cys623, Cys625/Cys634, Cys639/Cys649, Cys643/Cys655, and Cys657/Cys666. The interval Leu376–Phe388 is interaction with SHH zinc binding site. Asp383 provides a ligand contact to Zn(2+). N-linked (GlcNAc...) asparagine glycans are attached at residues Asn416, Asn447, and Asn459. EGF-like domains are found at residues Asp607–Cys634 and Arg635–Glu667.

This sequence belongs to the HHIP family. In terms of assembly, interacts with all three hedgehog family members, SHH, IHH and DHH. As to expression, in the adult brain, high expression found in the ventral cochlear nucleus, medial habenula, indusium griseum and tenia tecta. Some expression also in the caudate putamen, the nucleus accumbens, the ventral pallidum and in the superficial layers of the superior colliculus.

Its subcellular location is the cell membrane. The protein resides in the secreted. In terms of biological role, modulates hedgehog signaling in several cell types, including brain and lung through direct interaction with members of the hedgehog family. Soluble forms inhibit Shh-induced differentiation in the fibroblast cell line C3H/10T1/2. The chain is Hedgehog-interacting protein (Hhip) from Mus musculus (Mouse).